The following is a 483-amino-acid chain: Deoxyribodipyrimidine photo-lyase (483 aa).

Residues 2–136 (QKNLIWFRND…LVKGFHDNLL (135 aa)) enclose the Photolyase/cryptochrome alpha/beta domain. (6R)-5,10-methylene-5,6,7,8-tetrahydrofolate is bound by residues Asn109 and Glu110. Tyr225 serves as a coordination point for FAD. Arg229 provides a ligand contact to DNA. Residue 237 to 241 (TSMLS) participates in FAD binding. Interaction with DNA stretches follow at residues 278-285 (QILWREFY) and 345-346 (NR). Residue 376–378 (DGD) coordinates FAD. Gln408 is a DNA binding site.

Belongs to the DNA photolyase class-1 family. Monomer. FAD is required as a cofactor. The cofactor is (6R)-5,10-methylene-5,6,7,8-tetrahydrofolate.

The enzyme catalyses cyclobutadipyrimidine (in DNA) = 2 pyrimidine residues (in DNA).. Its function is as follows. Involved in repair of UV radiation-induced DNA damage. Catalyzes the light-dependent monomerization (300-600 nm) of cyclobutyl pyrimidine dimers (in cis-syn configuration), which are formed between adjacent bases on the same DNA strand upon exposure to ultraviolet radiation. This is Deoxyribodipyrimidine photo-lyase (phrB) from Buchnera aphidicola subsp. Acyrthosiphon pisum (strain APS) (Acyrthosiphon pisum symbiotic bacterium).